The primary structure comprises 156 residues: 6,7-dimethyl-8-ribityllumazine synthase (156 aa).

5-amino-6-(D-ribitylamino)uracil-binding positions include phenylalanine 22, 57–59 (AYE), and 81–83 (TVI). Position 86 to 87 (86 to 87 (GT)) interacts with (2S)-2-hydroxy-3-oxobutyl phosphate. Residue histidine 89 is the Proton donor of the active site. 5-amino-6-(D-ribitylamino)uracil is bound at residue phenylalanine 114. Arginine 128 lines the (2S)-2-hydroxy-3-oxobutyl phosphate pocket.

This sequence belongs to the DMRL synthase family. As to quaternary structure, forms an icosahedral capsid composed of 60 subunits, arranged as a dodecamer of pentamers.

It catalyses the reaction (2S)-2-hydroxy-3-oxobutyl phosphate + 5-amino-6-(D-ribitylamino)uracil = 6,7-dimethyl-8-(1-D-ribityl)lumazine + phosphate + 2 H2O + H(+). It participates in cofactor biosynthesis; riboflavin biosynthesis; riboflavin from 2-hydroxy-3-oxobutyl phosphate and 5-amino-6-(D-ribitylamino)uracil: step 1/2. In terms of biological role, catalyzes the formation of 6,7-dimethyl-8-ribityllumazine by condensation of 5-amino-6-(D-ribitylamino)uracil with 3,4-dihydroxy-2-butanone 4-phosphate. This is the penultimate step in the biosynthesis of riboflavin. This chain is 6,7-dimethyl-8-ribityllumazine synthase, found in Yersinia enterocolitica serotype O:8 / biotype 1B (strain NCTC 13174 / 8081).